We begin with the raw amino-acid sequence, 330 residues long: tRNA U34 carboxymethyltransferase (330 aa).

Carboxy-S-adenosyl-L-methionine is bound by residues Lys-91, Trp-105, Lys-110, Gly-130, Asp-152 to Ser-154, Ile-181 to Glu-182, Met-196, Tyr-200, and Arg-315.

Belongs to the class I-like SAM-binding methyltransferase superfamily. CmoB family. As to quaternary structure, homotetramer.

The enzyme catalyses carboxy-S-adenosyl-L-methionine + 5-hydroxyuridine(34) in tRNA = 5-carboxymethoxyuridine(34) in tRNA + S-adenosyl-L-homocysteine + H(+). Catalyzes carboxymethyl transfer from carboxy-S-adenosyl-L-methionine (Cx-SAM) to 5-hydroxyuridine (ho5U) to form 5-carboxymethoxyuridine (cmo5U) at position 34 in tRNAs. The protein is tRNA U34 carboxymethyltransferase of Shewanella sediminis (strain HAW-EB3).